The sequence spans 492 residues: MTLWINGDWITGQGASRVKRNPVSGEVLWQGNDADAAQVEQACRAARAAFPRWARLSLAERQVVVERFAGLLERNKGELTAIIARETGKPRWEAATEVTAMINKIAISIKAYHVRTGEQRSEMPDGAASLRHRPHGVLAVFGPYNFPGHLPNGHIVPALLAGNTIIFKPSELTPWSGEAVMRLWQQAGLPPGVLNLVQGGRETGQALSALEDLDGLLFTGSANTGYQLHRQLSGQPEKILALEMGGNNPLIIDEVADIDAAVHLTIQSAFVTAGQRCTCARRLLLKSGAQGDAFLARLVAVSQRLTPGNWDDEPQPFIGGLISEQAAQQVVTAWQQLEAMGGRTLLAPRLLQSETSLLTPGIIEMTGVAGVPDEEVFGPLLRVWRYDSFEEAILMANNTRFGLSCGLVSPEREKFDQLLLEARAGIVNWNKPLTGAASTAPFGGIGASGNHRPSAWYAADYCAWPMASLESDSLTLPATLNPGLDFSDEVVR.

220-225 (GSANTG) is an NAD(+) binding site. Residues Glu243 and Cys277 contribute to the active site.

It belongs to the aldehyde dehydrogenase family. AstD subfamily.

The catalysed reaction is N-succinyl-L-glutamate 5-semialdehyde + NAD(+) + H2O = N-succinyl-L-glutamate + NADH + 2 H(+). Its pathway is amino-acid degradation; L-arginine degradation via AST pathway; L-glutamate and succinate from L-arginine: step 4/5. Functionally, catalyzes the NAD-dependent reduction of succinylglutamate semialdehyde into succinylglutamate. The polypeptide is N-succinylglutamate 5-semialdehyde dehydrogenase (Escherichia coli (strain 55989 / EAEC)).